The primary structure comprises 507 residues: MEKWSLMTITVLLALTVRWTVSLGSYSGAGKPPMYGDYEAQRHWQEVTYNLPIRQWYFNTSDNNLLYWGLDYPPLTAYHSFLCAYVAKLINPDWIALHTSRGYESQSHKLFMRTTVFVADLLIYIPAVILYCCSLKETSTKKKVSSALCILLYPGLILIDHGHFQYNSVSLGFALWGVLCLSYDWDLLGSAAFCLALNYKQMELYHSLPFFCYLLGKCFKKGLKGKGLLLLIKLAGTVVASFAVCWLPFCTDVEQIMQVLRRLFPIDRGLFEDKVANIWCSLSVLIKIKNVVSPQTQLKLSFAVTFLSLLPTCIKLTVQPSLRGFKLTLVSCALSFFLFSFQVHEKSILLVSVPVCLIINEVPFMATWFLLVSTFSMLPLLLKDGLLLPYAVTTLAFLSACVASFAIFEKTSAKDLQLKPFSQSLRGYVSWFKLFPKIVRSLFLLSVTLMGVLSVMSAAVHPPQRFPDLFPVSVSSISCLHFLFFLVYFNVIILWDSKNSRNQKKVS.

Over 1–3 (MEK) the chain is Cytoplasmic. A helical transmembrane segment spans residues 4 to 24 (WSLMTITVLLALTVRWTVSLG). The Lumenal portion of the chain corresponds to 25-114 (SYSGAGKPPM…SQSHKLFMRT (90 aa)). An N-linked (GlcNAc...) asparagine glycan is attached at Asn59. Residues 115-135 (TVFVADLLIYIPAVILYCCSL) traverse the membrane as a helical segment. At 136–143 (KETSTKKK) the chain is on the cytoplasmic side. Residues 144-164 (VSSALCILLYPGLILIDHGHF) traverse the membrane as a helical segment. At 165–168 (QYNS) the chain is on the lumenal side. The chain crosses the membrane as a helical span at residues 169–189 (VSLGFALWGVLCLSYDWDLLG). Over 190 to 226 (SAAFCLALNYKQMELYHSLPFFCYLLGKCFKKGLKGK) the chain is Cytoplasmic. The helical transmembrane segment at 227–247 (GLLLLIKLAGTVVASFAVCWL) threads the bilayer. At 248–297 (PFCTDVEQIMQVLRRLFPIDRGLFEDKVANIWCSLSVLIKIKNVVSPQTQ) the chain is on the lumenal side. The helical transmembrane segment at 298 to 318 (LKLSFAVTFLSLLPTCIKLTV) threads the bilayer. At 319–338 (QPSLRGFKLTLVSCALSFFL) the chain is on the cytoplasmic side. The helical transmembrane segment at 339-359 (FSFQVHEKSILLVSVPVCLII) threads the bilayer. The Lumenal portion of the chain corresponds to 360–361 (NE). Residues 362–382 (VPFMATWFLLVSTFSMLPLLL) traverse the membrane as a helical segment. Residues 383-387 (KDGLL) lie on the Cytoplasmic side of the membrane. A helical membrane pass occupies residues 388–408 (LPYAVTTLAFLSACVASFAIF). Topologically, residues 409–441 (EKTSAKDLQLKPFSQSLRGYVSWFKLFPKIVRS) are lumenal. A helical membrane pass occupies residues 442 to 462 (LFLLSVTLMGVLSVMSAAVHP). The Cytoplasmic segment spans residues 463-473 (PQRFPDLFPVS). The chain crosses the membrane as a helical span at residues 474-494 (VSSISCLHFLFFLVYFNVIIL). At 495–507 (WDSKNSRNQKKVS) the chain is on the lumenal side.

Belongs to the ALG6/ALG8 glucosyltransferase family.

The protein resides in the endoplasmic reticulum membrane. It catalyses the reaction an alpha-D-Man-(1-&gt;2)-alpha-D-Man-(1-&gt;2)-alpha-D-Man-(1-&gt;3)-[alpha-D-Man-(1-&gt;2)-alpha-D-Man-(1-&gt;3)-[alpha-D-Man-(1-&gt;2)-alpha-D-Man-(1-&gt;6)]-alpha-D-Man-(1-&gt;6)]-beta-D-Man-(1-&gt;4)-beta-D-GlcNAc-(1-&gt;4)-alpha-D-GlcNAc-diphospho-di-trans,poly-cis-dolichol + a di-trans,poly-cis-dolichyl beta-D-glucosyl phosphate = an alpha-D-Glc-(1-&gt;3)-alpha-D-Man-(1-&gt;2)-alpha-D-Man-(1-&gt;2)-alpha-D-Man-(1-&gt;3)-[alpha-D-Man-(1-&gt;2)-alpha-D-Man-(1-&gt;3)-[alpha-D-Man-(1-&gt;2)-alpha-D-Man-(1-&gt;6)]-alpha-D-Man-(1-&gt;6)]-beta-D-Man-(1-&gt;4)-beta-D-GlcNAc-(1-&gt;4)-alpha-D-GlcNAc-diphospho-di-trans,poly-cis-dolichol + a di-trans,poly-cis-dolichyl phosphate + H(+). Its pathway is protein modification; protein glycosylation. Dolichyl pyrophosphate Man9GlcNAc2 alpha-1,3-glucosyltransferase that operates in the biosynthetic pathway of dolichol-linked oligosaccharides, the glycan precursors employed in protein asparagine (N)-glycosylation. The assembly of dolichol-linked oligosaccharides begins on the cytosolic side of the endoplasmic reticulum membrane and finishes in its lumen. The sequential addition of sugars to dolichol pyrophosphate produces dolichol-linked oligosaccharides containing fourteen sugars, including two GlcNAcs, nine mannoses and three glucoses. Once assembled, the oligosaccharide is transferred from the lipid to nascent proteins by oligosaccharyltransferases. In the lumen of the endoplasmic reticulum, adds the first glucose residue from dolichyl phosphate glucose (Dol-P-Glc) onto the lipid-linked oligosaccharide intermediate Man(9)GlcNAc(2)-PP-Dol to produce Glc(1)Man(9)GlcNAc(2)-PP-Dol. Glc(1)Man(9)GlcNAc(2)-PP-Dol is a substrate for ALG8, the following enzyme in the biosynthetic pathway. The polypeptide is Dolichyl pyrophosphate Man9GlcNAc2 alpha-1,3-glucosyltransferase (Gallus gallus (Chicken)).